Here is a 140-residue protein sequence, read N- to C-terminus: Ribonuclease P protein component (140 aa).

This sequence belongs to the RnpA family. As to quaternary structure, consists of a catalytic RNA component (M1 or rnpB) and a protein subunit.

It carries out the reaction Endonucleolytic cleavage of RNA, removing 5'-extranucleotides from tRNA precursor.. RNaseP catalyzes the removal of the 5'-leader sequence from pre-tRNA to produce the mature 5'-terminus. It can also cleave other RNA substrates such as 4.5S RNA. The protein component plays an auxiliary but essential role in vivo by binding to the 5'-leader sequence and broadening the substrate specificity of the ribozyme. The polypeptide is Ribonuclease P protein component (Ralstonia pickettii (strain 12J)).